Consider the following 651-residue polypeptide: MKQKIKSRLKKDNWLRYLSQTVAVCFLLLFISFFIFLLIEAAKTGPDFTKSLLGLEFNLGAKKASIWFPLLVSFVVSIGSLIIASYIGVRTSIFLVYRCKPRIRKKLLLVIDILSGIPSVIFGLFATQILSSIFRDVLHLPPLSLLNVIVMLSFMIIPIVISLTTNALLHVESSLMTVAISLGENKTSVIYKVIKKEIKAQLVVILVLAFGRAISETMAVNFILQSVNYQEVIANDRFFTSDLKTLGSVISTFIFSENGDEQVSGVLYTFGIIIFVLISFLNFFAIWSTRPKTLERYPFLKKISNFIYQVVWFIPNNIGALFTDLTARRQQVKKITAANVEQRATFFKERMQTNHLNKVYTSWKILQEIFCAVLAFGFVLGILLFVFINGSQAIQRSGSTVFSFGVDTTGRALVNTLVIILVAIGITFPIALLIAIWLNEYTKSRIAKNTFSFVIDSLSSMPSIIYGLFGLSFFLRTLQLSAGGANGTSLMAGILTISVVVLPFLIRTCQEALNNVSWDLRVSAYALGVSKREVIWKIVLPGALKGLIIALILTINRIIAETAPFFITAGLASSNLFDLSLPGQTLTTRIYGQLFSTNSTAVDVMLETALVSIVFLMFLIFLSSYLIPYLFSFNKQKWLQIKSKLQLWKKA.

The next 12 membrane-spanning stretches (helical) occupy residues 22-42, 64-84, 107-127, 143-163, 203-223, 266-286, 368-388, 417-437, 451-471, 486-506, 535-555, and 613-633; these read VAVCFLLLFISFFIFLLIEAA, ASIWFPLLVSFVVSIGSLIIA, LLLVIDILSGIPSVIFGLFAT, LSLLNVIVMLSFMIIPIVISL, VVILVLAFGRAISETMAVNFI, VLYTFGIIIFVLISFLNFFAI, EIFCAVLAFGFVLGILLFVFI, LVIILVAIGITFPIALLIAIW, FSFVIDSLSSMPSIIYGLFGL, NGTSLMAGILTISVVVLPFLI, IWKIVLPGALKGLIIALILTI, and IVFLMFLIFLSSYLIPYLFSF. Positions 70–285 constitute an ABC transmembrane type-1 1 domain; that stretch reads LLVSFVVSIG…VLISFLNFFA (216 aa). Positions 413 to 623 constitute an ABC transmembrane type-1 2 domain; the sequence is LVNTLVIILV…VFLMFLIFLS (211 aa).

It belongs to the binding-protein-dependent transport system permease family. CysTW subfamily.

The protein resides in the cell membrane. In terms of biological role, could be part of a binding-protein-dependent transport system for phosphate; probably responsible for the translocation of the substrate across the membrane. The protein is Phosphate transport system permease protein PstA homolog (pstA) of Mycoplasma pneumoniae (strain ATCC 29342 / M129 / Subtype 1) (Mycoplasmoides pneumoniae).